The primary structure comprises 308 residues: Putative integrase/recombinase y4qK (308 aa).

A Core-binding (CB) domain is found at 15-97 (LVMTPLRQRM…ALRFFFSVTL (83 aa)). The region spanning 115–288 (KLPIILSPDE…ATNKVCATSS (174 aa)) is the Tyr recombinase domain. Active-site residues include arginine 150, lysine 175, histidine 240, arginine 243, and histidine 266. Catalysis depends on tyrosine 275, which acts as the O-(3'-phospho-DNA)-tyrosine intermediate.

This sequence belongs to the 'phage' integrase family.

Its function is as follows. May function as an integrase. This chain is Putative integrase/recombinase y4qK, found in Sinorhizobium fredii (strain NBRC 101917 / NGR234).